A 214-amino-acid chain; its full sequence is MQITVSNLKKSYGGSTVLDVESLTFESGKITGIIGPNGAGKTTLLNIISGIDMDFEGDVEYSGSDYSEVKRDITMVFQKGGLLKRSVFENIAYPLKLRGTDKNEIQQTVVELMRHLGIEELSSKKAHKLSGGETQRVALARALAIKPRALLLDEPTASIDPEYMETIEKCIVDYNRKSKATILIITHSMDQARRLCDNIVFLESGRVGEADGFF.

One can recognise an ABC transporter domain in the interval 3 to 214 (ITVSNLKKSY…GRVGEADGFF (212 aa)). 35–42 (GPNGAGKT) contributes to the ATP binding site.

Belongs to the ABC transporter superfamily. The complex is composed of two ATP-binding proteins (TupC), two transmembrane proteins (TupB) and a solute-binding protein (TupA).

The enzyme catalyses tungstate(in) + ATP + H2O = tungstate(out) + ADP + phosphate + H(+). Part of an ABC transporter complex involved in tungstate uptake. Probably responsible for energy coupling to the transport system. The chain is Tungstate uptake system ATP-binding protein TupC from Peptoclostridium acidaminophilum (Eubacterium acidaminophilum).